A 95-amino-acid polypeptide reads, in one-letter code: Small ribosomal subunit protein bS16 (95 aa).

It belongs to the bacterial ribosomal protein bS16 family.

In Thermotoga neapolitana (strain ATCC 49049 / DSM 4359 / NBRC 107923 / NS-E), this protein is Small ribosomal subunit protein bS16.